A 162-amino-acid polypeptide reads, in one-letter code: GTP-dependent dephospho-CoA kinase (162 aa).

Asp-40, Val-41, Val-42, Asp-59, Lys-61, and Glu-111 together coordinate GTP.

Belongs to the GTP-dependent DPCK family.

It catalyses the reaction 3'-dephospho-CoA + GTP = GDP + CoA + H(+). Its pathway is cofactor biosynthesis; coenzyme A biosynthesis. Functionally, catalyzes the GTP-dependent phosphorylation of the 3'-hydroxyl group of dephosphocoenzyme A to form coenzyme A (CoA). This Sulfurisphaera tokodaii (strain DSM 16993 / JCM 10545 / NBRC 100140 / 7) (Sulfolobus tokodaii) protein is GTP-dependent dephospho-CoA kinase.